The chain runs to 206 residues: Dephospho-CoA kinase (206 aa).

The 201-residue stretch at 4-204 folds into the DPCK domain; it reads IVGLTGGIGS…HQYLQLANAQ (201 aa). An ATP-binding site is contributed by 12–17; sequence GSGKST.

This sequence belongs to the CoaE family.

The protein resides in the cytoplasm. It catalyses the reaction 3'-dephospho-CoA + ATP = ADP + CoA + H(+). It participates in cofactor biosynthesis; coenzyme A biosynthesis; CoA from (R)-pantothenate: step 5/5. In terms of biological role, catalyzes the phosphorylation of the 3'-hydroxyl group of dephosphocoenzyme A to form coenzyme A. This chain is Dephospho-CoA kinase, found in Pasteurella multocida (strain Pm70).